We begin with the raw amino-acid sequence, 256 residues long: Small ribosomal subunit protein eS1 (256 aa).

Over residues 1 to 18 (MAVGKNKRLSKGKKGVKK) the composition is skewed to basic residues. Positions 1–21 (MAVGKNKRLSKGKKGVKKRTV) are disordered. An N-acetylalanine; partial modification is found at Ala2.

It belongs to the eukaryotic ribosomal protein eS1 family. Component of the small ribosomal subunit. Mature ribosomes consist of a small (40S) and a large (60S) subunit. The 40S subunit contains about 33 different proteins and 1 molecule of RNA (18S). The 60S subunit contains about 49 different proteins and 3 molecules of RNA (25S, 5.8S and 5S).

The protein resides in the cytoplasm. The protein is Small ribosomal subunit protein eS1 (rps1) of Aspergillus niger (strain ATCC MYA-4892 / CBS 513.88 / FGSC A1513).